The chain runs to 290 residues: Pyridoxal kinase PdxY (290 aa).

Substrate is bound by residues S12 and T47 to Q48. ATP-binding positions include D114, E151, K184, and R211 to L214. D225 contributes to the substrate binding site.

Belongs to the pyridoxine kinase family. PdxY subfamily. In terms of assembly, homodimer. It depends on Mg(2+) as a cofactor.

It catalyses the reaction pyridoxal + ATP = pyridoxal 5'-phosphate + ADP + H(+). It participates in cofactor metabolism; pyridoxal 5'-phosphate salvage; pyridoxal 5'-phosphate from pyridoxal: step 1/1. Functionally, pyridoxal kinase involved in the salvage pathway of pyridoxal 5'-phosphate (PLP). Catalyzes the phosphorylation of pyridoxal to PLP. In Pseudomonas fluorescens (strain Pf0-1), this protein is Pyridoxal kinase PdxY.